Reading from the N-terminus, the 428-residue chain is Adenylosuccinate synthetase (428 aa).

GTP is bound by residues 12–18 (GDEGKGK) and 40–42 (GHT). D13 acts as the Proton acceptor in catalysis. D13 and G40 together coordinate Mg(2+). IMP is bound by residues 13–16 (DEGK), 38–41 (NAGH), T128, R142, Q222, T237, and R301. H41 (proton donor) is an active-site residue. Residue 297–303 (VNTGRAR) participates in substrate binding. GTP-binding positions include R303, 329–331 (KLD), and 411–413 (STS).

It belongs to the adenylosuccinate synthetase family. As to quaternary structure, homodimer. It depends on Mg(2+) as a cofactor.

Its subcellular location is the cytoplasm. The enzyme catalyses IMP + L-aspartate + GTP = N(6)-(1,2-dicarboxyethyl)-AMP + GDP + phosphate + 2 H(+). The protein operates within purine metabolism; AMP biosynthesis via de novo pathway; AMP from IMP: step 1/2. Plays an important role in the de novo pathway of purine nucleotide biosynthesis. Catalyzes the first committed step in the biosynthesis of AMP from IMP. The protein is Adenylosuccinate synthetase of Caulobacter vibrioides (strain ATCC 19089 / CIP 103742 / CB 15) (Caulobacter crescentus).